Consider the following 686-residue polypeptide: Leucine-rich repeat-containing protein 49 (686 aa).

7 LRR repeats span residues 113 to 134 (HLRL…SNLQ), 135 to 156 (RLIF…STLK), 157 to 178 (SLRV…ENLK), 179 to 200 (NLDV…NHLC), 201 to 222 (DLRV…NGLD), 223 to 244 (SLTE…DNLP), and 245 to 266 (CLQR…SCLA). The region spanning 279–317 (NPIAQESWYKHTVLQNMMQLRQLDMKRITEEERRVASVV) is the LRRCT domain. 2 disordered regions span residues 311-332 (RRVA…HKQS) and 359-381 (ASTQ…DGGN). Positions 319–341 (KKEEEKKRESHKQSLLKEKKRLT) form a coiled coil.

In terms of assembly, part of the neuronal tubulin polyglutamylase complex which contains TPGS1, TPGS2, TTLL1, LRRC49 and NICN1. Interacts with PCM1; TTLL1, TPGS1, TPGS2 and LRRC49.

It is found in the cytoplasm. It localises to the cytoskeleton. The protein localises to the microtubule organizing center. The protein resides in the centrosome. Its subcellular location is the centriolar satellite. Subunit of the tubulin polyglutamylase complex (TPGC). The complex mediates cilia and flagella polyglutamylation which is essential for their biogenesis and motility. This Mus musculus (Mouse) protein is Leucine-rich repeat-containing protein 49 (Lrrc49).